The following is a 452-amino-acid chain: Elongation factor Tu, mitochondrial (452 aa).

The transit peptide at 1-43 (MAAATLLRATPRFSGLCASPTPFLQGRLRPLKAPASPFLCRGL) directs the protein to the mitochondrion. One can recognise a tr-type G domain in the interval 55-251 (KPHVNVGTIG…AVDTYIPVPT (197 aa)). Positions 64-71 (GHVDHGKT) are G1. GTP is bound by residues D67, G69, K70, T71, and T72. Residue T71 coordinates Mg(2+). K79 bears the N6-acetyllysine mark. Residue K88 is modified to N6-acetyllysine; alternate. Residue K88 is modified to N6-succinyllysine; alternate. The segment at 105–109 (GITIN) is G2. Residues 126 to 129 (DCPG) form a G3 region. Residues N181, D184, S219, A220, and L221 each coordinate GTP. A G4 region spans residues 181 to 184 (NKAD). The G5 stretch occupies residues 219-221 (SAL). K234 carries the post-translational modification N6-succinyllysine. K256 carries the N6-acetyllysine modification. T278 bears the Phosphothreonine mark. Position 286 is an N6-succinyllysine (K286). S312 carries the post-translational modification Phosphoserine. An N6-acetyllysine mark is found at K361 and K418.

The protein belongs to the TRAFAC class translation factor GTPase superfamily. Classic translation factor GTPase family. EF-Tu/EF-1A subfamily. In terms of assembly, interacts with NLRX1. Interacts with ATG16L1.

The protein localises to the mitochondrion. The catalysed reaction is GTP + H2O = GDP + phosphate + H(+). Functionally, GTP hydrolase that promotes the GTP-dependent binding of aminoacyl-tRNA to the A-site of ribosomes during protein biosynthesis. Plays a role in the regulation of autophagy and innate immunity. Recruits ATG5-ATG12 and NLRX1 at mitochondria and serves as a checkpoint of the RIGI-MAVS pathway. In turn, inhibits RLR-mediated type I interferon while promoting autophagy. The sequence is that of Elongation factor Tu, mitochondrial from Rattus norvegicus (Rat).